The sequence spans 328 residues: NADH-quinone oxidoreductase subunit H (328 aa).

Transmembrane regions (helical) follow at residues 10 to 30, 80 to 100, 118 to 138, 155 to 175, 191 to 211, 243 to 263, 272 to 292, and 306 to 326; these read IIKI…GTYF, IAPV…PFLP, IGIL…LLGG, AVFI…IMMV, ITSW…IAAF, LFFI…SLLF, LLGA…FLWT, and WLCW…TAIV.

Belongs to the complex I subunit 1 family. As to quaternary structure, NDH-1 is composed of 14 different subunits. Subunits NuoA, H, J, K, L, M, N constitute the membrane sector of the complex.

Its subcellular location is the cell inner membrane. It catalyses the reaction a quinone + NADH + 5 H(+)(in) = a quinol + NAD(+) + 4 H(+)(out). In terms of biological role, NDH-1 shuttles electrons from NADH, via FMN and iron-sulfur (Fe-S) centers, to quinones in the respiratory chain. The immediate electron acceptor for the enzyme in this species is believed to be ubiquinone. Couples the redox reaction to proton translocation (for every two electrons transferred, four hydrogen ions are translocated across the cytoplasmic membrane), and thus conserves the redox energy in a proton gradient. This subunit may bind ubiquinone. The polypeptide is NADH-quinone oxidoreductase subunit H (Sulfurimonas denitrificans (strain ATCC 33889 / DSM 1251) (Thiomicrospira denitrificans (strain ATCC 33889 / DSM 1251))).